A 1343-amino-acid polypeptide reads, in one-letter code: DNA-directed RNA polymerase subunit beta (1343 aa).

Belongs to the RNA polymerase beta chain family. The RNAP catalytic core consists of 2 alpha, 1 beta, 1 beta' and 1 omega subunit. When a sigma factor is associated with the core the holoenzyme is formed, which can initiate transcription.

The catalysed reaction is RNA(n) + a ribonucleoside 5'-triphosphate = RNA(n+1) + diphosphate. Its function is as follows. DNA-dependent RNA polymerase catalyzes the transcription of DNA into RNA using the four ribonucleoside triphosphates as substrates. This is DNA-directed RNA polymerase subunit beta from Shewanella frigidimarina (strain NCIMB 400).